The primary structure comprises 1728 residues: Protein NETWORKED 1A (1728 aa).

Residues 13 to 92 (YSWWWDSHIP…ERYDHATVEL (80 aa)) enclose the NAB domain. Coiled coils occupy residues 155 to 446 (LGNS…LEIE), 476 to 827 (MLRD…QVEI), 857 to 885 (FSEKLIAELESENLEQQMEAEFLVHEIDN), 954 to 1016 (QFQS…AELQ), 1090 to 1323 (EQAE…KETV), 1403 to 1431 (LLQDMKTRIKTIKQAVAEEKKRRGKLRRR), and 1576 to 1684 (RRLA…TKSK). A disordered region spans residues 1419 to 1441 (AEEKKRRGKLRRRSSSHRSKDRK). Residues 1424 to 1439 (RRGKLRRRSSSHRSKD) are compositionally biased toward basic residues.

The protein belongs to the NET family. Interacts with F-actin. Expressed in root meristems and at very low levels throughout mature vasculature.

It localises to the cytoplasm. Its subcellular location is the cytoskeleton. The protein localises to the cell membrane. The protein resides in the cell junction. It is found in the plasmodesma. Functionally, plant-specific actin binding protein. Associates with F-actin at the plasma membrane and plasmodesmata. May be part of a membrane-cytoskeletal adapter complex. In Arabidopsis thaliana (Mouse-ear cress), this protein is Protein NETWORKED 1A.